Here is a 431-residue protein sequence, read N- to C-terminus: Glutamate-1-semialdehyde 2,1-aminomutase (431 aa).

Residue Lys267 is modified to N6-(pyridoxal phosphate)lysine.

The protein belongs to the class-III pyridoxal-phosphate-dependent aminotransferase family. HemL subfamily. As to quaternary structure, homodimer. The cofactor is pyridoxal 5'-phosphate.

It is found in the cytoplasm. It carries out the reaction (S)-4-amino-5-oxopentanoate = 5-aminolevulinate. It functions in the pathway porphyrin-containing compound metabolism; protoporphyrin-IX biosynthesis; 5-aminolevulinate from L-glutamyl-tRNA(Glu): step 2/2. The polypeptide is Glutamate-1-semialdehyde 2,1-aminomutase (Myxococcus xanthus (strain DK1622)).